Reading from the N-terminus, the 119-residue chain is Large ribosomal subunit protein uL18 (119 aa).

Belongs to the universal ribosomal protein uL18 family. In terms of assembly, part of the 50S ribosomal subunit; part of the 5S rRNA/L5/L18/L25 subcomplex. Contacts the 5S and 23S rRNAs.

In terms of biological role, this is one of the proteins that bind and probably mediate the attachment of the 5S RNA into the large ribosomal subunit, where it forms part of the central protuberance. The protein is Large ribosomal subunit protein uL18 of Legionella pneumophila (strain Paris).